The chain runs to 152 residues: uncharacterized protein (152 aa).

The signal sequence occupies residues Met1 to Cys24.

This is an uncharacterized protein from Acheta domesticus (House cricket).